We begin with the raw amino-acid sequence, 165 residues long: MSLAEDIALVARQESALVFEHFDENTAWQLGSRLRQMAVERGYPLVIDVRRFGQVLFTAALPGAVPDQAEWVRRKTNVVARFHRSSYAIGLELAEKQSSLEEKQGLPTVDFATHGGCFPIRVKSAGIIGCVTVSGLPQRADHELVVEAICALTGLDYATYKLPQA.

It belongs to the UPF0303 family.

The protein is UPF0303 protein ACP_1015 of Acidobacterium capsulatum (strain ATCC 51196 / DSM 11244 / BCRC 80197 / JCM 7670 / NBRC 15755 / NCIMB 13165 / 161).